A 166-amino-acid chain; its full sequence is uncharacterized protein (166 aa).

This sequence to C.perfringens pCP13 PCP12.

This is an uncharacterized protein from Clostridium perfringens.